The sequence spans 224 residues: MGQKVHPTGIRLGIVKKHTSTWYAGKAEYADKLNQDLQVRKYIQNALAHASVSRIDIERPANTARVTIHTARPGIVIGKKGEDVEKLRTELTKQMGVPVHINIEEIRKPDLDAALAAQSVAQQLERRVMFRRAMKRTVQNAMRQGAEGVKVQVGGRLGGAEIARSEWYREGRVPLHTLRADIDYATAEASTTYGIIGVKVWIFKGEIIGGIEEVEANQKKKGSK.

Residues 39-107 (VRKYIQNALA…PVHINIEEIR (69 aa)) enclose the KH type-2 domain.

This sequence belongs to the universal ribosomal protein uS3 family. Part of the 30S ribosomal subunit. Forms a tight complex with proteins S10 and S14.

Its function is as follows. Binds the lower part of the 30S subunit head. Binds mRNA in the 70S ribosome, positioning it for translation. The chain is Small ribosomal subunit protein uS3 from Saccharophagus degradans (strain 2-40 / ATCC 43961 / DSM 17024).